We begin with the raw amino-acid sequence, 255 residues long: Imidazole glycerol phosphate synthase subunit HisF (255 aa).

Active-site residues include D11 and D130.

Belongs to the HisA/HisF family. Heterodimer of HisH and HisF.

It is found in the cytoplasm. The catalysed reaction is 5-[(5-phospho-1-deoxy-D-ribulos-1-ylimino)methylamino]-1-(5-phospho-beta-D-ribosyl)imidazole-4-carboxamide + L-glutamine = D-erythro-1-(imidazol-4-yl)glycerol 3-phosphate + 5-amino-1-(5-phospho-beta-D-ribosyl)imidazole-4-carboxamide + L-glutamate + H(+). Its pathway is amino-acid biosynthesis; L-histidine biosynthesis; L-histidine from 5-phospho-alpha-D-ribose 1-diphosphate: step 5/9. Functionally, IGPS catalyzes the conversion of PRFAR and glutamine to IGP, AICAR and glutamate. The HisF subunit catalyzes the cyclization activity that produces IGP and AICAR from PRFAR using the ammonia provided by the HisH subunit. The sequence is that of Imidazole glycerol phosphate synthase subunit HisF from Synechococcus sp. (strain ATCC 27144 / PCC 6301 / SAUG 1402/1) (Anacystis nidulans).